The chain runs to 360 residues: Photosystem II protein D1 3 (360 aa).

The next 3 membrane-spanning stretches (helical) occupy residues 29–46 (YVGWFGVLMIPTLLAATI), 118–133 (HFLIGVFCYMGREWEL), and 142–156 (WICVAYSAPVAAATA). A chlorophyll a-binding site is contributed by histidine 118. Tyrosine 126 provides a ligand contact to pheophytin a. The [CaMn4O5] cluster site is built by aspartate 170 and glutamate 189. The chain crosses the membrane as a helical span at residues 197-218 (FHQLGVAGVFGGALFSAMHGSL). Histidine 198 contributes to the chlorophyll a binding site. A quinone contacts are provided by residues histidine 215 and 264 to 265 (SF). Histidine 215 contacts Fe cation. Residue histidine 272 participates in Fe cation binding. Residues 274 to 288 (FLAAWPVIGIWFTAL) form a helical membrane-spanning segment. Histidine 332, glutamate 333, aspartate 342, and alanine 344 together coordinate [CaMn4O5] cluster. Positions 345-360 (SAESAPVAMIAPSING) are excised as a propeptide.

Belongs to the reaction center PufL/M/PsbA/D family. As to quaternary structure, PSII is composed of 1 copy each of membrane proteins PsbA, PsbB, PsbC, PsbD, PsbE, PsbF, PsbH, PsbI, PsbJ, PsbK, PsbL, PsbM, PsbT, PsbX, PsbY, PsbZ, Psb30/Ycf12, peripheral proteins PsbO, CyanoQ (PsbQ), PsbU, PsbV and a large number of cofactors. It forms dimeric complexes. Precursor protein interacts with Ycf48. The cofactor is The D1/D2 heterodimer binds P680, chlorophylls that are the primary electron donor of PSII, and subsequent electron acceptors. It shares a non-heme iron and each subunit binds pheophytin, quinone, additional chlorophylls, carotenoids and lipids. D1 provides most of the ligands for the Mn4-Ca-O5 cluster of the oxygen-evolving complex (OEC). There is also a Cl(-1) ion associated with D1 and D2, which is required for oxygen evolution. The PSII complex binds additional chlorophylls, carotenoids and specific lipids.. Post-translationally, C-terminally processed by CtpA; processing is essential to allow assembly of the oxygen-evolving complex and thus photosynthetic growth. In terms of processing, tyr-161 forms a radical intermediate that is referred to as redox-active TyrZ, YZ or Y-Z.

Its subcellular location is the cellular thylakoid membrane. It carries out the reaction 2 a plastoquinone + 4 hnu + 2 H2O = 2 a plastoquinol + O2. Its function is as follows. Photosystem II (PSII) is a light-driven water:plastoquinone oxidoreductase that uses light energy to abstract electrons from H(2)O, generating O(2) and a proton gradient subsequently used for ATP formation. It consists of a core antenna complex that captures photons, and an electron transfer chain that converts photonic excitation into a charge separation. The D1/D2 (PsbA/PsbD) reaction center heterodimer binds P680, the primary electron donor of PSII as well as several subsequent electron acceptors. This Thermosynechococcus vestitus (strain NIES-2133 / IAM M-273 / BP-1) protein is Photosystem II protein D1 3.